The following is a 393-amino-acid chain: Chalcone synthase 1 (393 aa).

Cysteine 166 is a catalytic residue.

The protein belongs to the thiolase-like superfamily. Chalcone/stilbene synthases family.

It catalyses the reaction (E)-4-coumaroyl-CoA + 3 malonyl-CoA + 3 H(+) = 2',4,4',6'-tetrahydroxychalcone + 3 CO2 + 4 CoA. Its pathway is secondary metabolite biosynthesis; flavonoid biosynthesis. Its function is as follows. The primary product of this enzyme is 4,2',4',6'-tetrahydroxychalcone (also termed naringenin-chalcone or chalcone) which can under specific conditions spontaneously isomerize into naringenin. The protein is Chalcone synthase 1 (CHS1) of Ruta graveolens (Common rue).